The primary structure comprises 200 residues: MHSTPIQDALVPMVIEQTSRGERSFDIYSRLLKERVIFLVGQVEDHMANLIVAQLLFLESENPDKDIHLYINSPGGSVTAGMAIYDTMRFIKPDVSTMCIGQAASMGSFLLSAGAEGKRYALPNSRVMIHQPLGGFQGQASDIEIHAKEIIQIKQKLNKALADHTGQPIEVIENDTDRDNFMSADEACDYGLVDKVLTRR.

Ser105 serves as the catalytic Nucleophile. His130 is a catalytic residue.

It belongs to the peptidase S14 family. As to quaternary structure, fourteen ClpP subunits assemble into 2 heptameric rings which stack back to back to give a disk-like structure with a central cavity, resembling the structure of eukaryotic proteasomes.

The protein resides in the cytoplasm. The catalysed reaction is Hydrolysis of proteins to small peptides in the presence of ATP and magnesium. alpha-casein is the usual test substrate. In the absence of ATP, only oligopeptides shorter than five residues are hydrolyzed (such as succinyl-Leu-Tyr-|-NHMec, and Leu-Tyr-Leu-|-Tyr-Trp, in which cleavage of the -Tyr-|-Leu- and -Tyr-|-Trp bonds also occurs).. In terms of biological role, cleaves peptides in various proteins in a process that requires ATP hydrolysis. Has a chymotrypsin-like activity. Plays a major role in the degradation of misfolded proteins. This is ATP-dependent Clp protease proteolytic subunit from Hydrogenovibrio crunogenus (strain DSM 25203 / XCL-2) (Thiomicrospira crunogena).